Here is an 87-residue protein sequence, read N- to C-terminus: UPF0213 protein SYNAS_10430 (87 aa).

The 77-residue stretch at 2-78 (SKNYVYILEC…KKMSRAEKLQ (77 aa)) folds into the GIY-YIG domain.

The protein belongs to the UPF0213 family.

The chain is UPF0213 protein SYNAS_10430 from Syntrophus aciditrophicus (strain SB).